The following is a 69-amino-acid chain: Conotoxin Gla-TxXI (69 aa).

The first 25 residues, 1 to 25, serve as a signal peptide directing secretion; that stretch reads MVRVTSVGCFLLVIVSLNLVVLTNA. Cystine bridges form between Cys-26/Cys-40, Cys-33/Cys-45, Cys-39/Cys-49, and Cys-44/Cys-53. At Glu-29 the chain carries 4-carboxyglutamate. The residue at position 56 (Pro-56) is a Proline amide. The propeptide occupies 60-69; it reads AKLLEFFRQR.

Post-translationally, contains 4 disulfide bonds. In terms of tissue distribution, expressed by the venom duct.

The protein localises to the secreted. The polypeptide is Conotoxin Gla-TxXI (Conus textile (Cloth-of-gold cone)).